The chain runs to 97 residues: Antitoxin TacA2 (97 aa).

The protein belongs to the TacA antitoxin family. In terms of assembly, homodimer. Forms a complex with cognate toxin TacT2.

In terms of biological role, antitoxin component of a type II toxin-antitoxin (TA) system. Counteracts the toxic effect of cognate toxin TacT2. Its function is as follows. The TacA2-TacT2 complex both represses and derepresses expression of its own operon. This is Antitoxin TacA2 from Salmonella enteritidis.